Here is a 300-residue protein sequence, read N- to C-terminus: L-arabinolactonase (300 aa).

A divalent metal cation is bound by residues Glu-22, Asn-156, and Asp-205.

The protein belongs to the SMP-30/CGR1 family. A divalent metal cation serves as cofactor.

The enzyme catalyses L-arabinono-1,4-lactone + H2O = L-arabinonate + H(+). In terms of biological role, catalyzes the cleavage of L-arabino-gamma-lactone to L-arabonate. Is involved in a degradation pathway of L-arabinose that allows A.brasilense to grow on L-arabinose as a sole carbon source. Can also use D-galactono-1,4-lactone as substrate in vitro; however, the enzyme is probably not involved in the metabolism of D-galactose in vivo. The polypeptide is L-arabinolactonase (araB) (Azospirillum brasilense).